Consider the following 628-residue polypeptide: Cytoplasmic dynein 1 intermediate chain 1 (628 aa).

Composition is skewed to basic and acidic residues over residues 1 to 13 (MSDK…ELER) and 20 to 60 (QIRE…RETE). Residues 1–114 (MSDKSDLKAE…RTLQWDTDPS (114 aa)) are disordered. Serine 2 carries the N-acetylserine modification. Serine 50 carries the phosphoserine modification. Residues 70-79 (PEPPLVPTPM) show a composition bias toward pro residues. The span at 80–90 (SPSSKSVSTPS) shows a compositional bias: low complexity. Residue serine 83 is modified to Phosphoserine. At threonine 88 the chain carries Phosphothreonine. Serine 90, serine 94, and serine 97 each carry phosphoserine. Over residues 105–114 (RTLQWDTDPS) the composition is skewed to polar residues. The interaction with DYNLT1 stretch occupies residues 130-146 (KLGVSKVTQVDFLPREV). Residues 152 to 204 (ETQTPLATHQSEEDEEDEEMVEPKIGHDSELENQEKKQETKEAPPRELTEEEK) form a disordered region. Threonine 159 bears the Phosphothreonine mark. Residues serine 162 and serine 180 each carry the phosphoserine modification. Positions 172-204 (VEPKIGHDSELENQEKKQETKEAPPRELTEEEK) are enriched in basic and acidic residues. 7 WD repeats span residues 268 to 317 (SKHR…TTPE), 321 to 361 (HCQS…RTPV), 370 to 411 (AHTH…TPQE), 420 to 460 (SKPV…AGIG), 465 to 510 (GHQG…PLYS), 513 to 553 (DNAD…EVPT), and 559 to 598 (EGAS…VPHN). Serine 618 carries the post-translational modification Phosphoserine.

Belongs to the dynein intermediate chain family. Homodimer. The cytoplasmic dynein 1 complex consists of two catalytic heavy chains (HCs) and a number of non-catalytic subunits presented by intermediate chains (ICs), light intermediate chains (LICs) and light chains (LCs); the composition seems to vary in respect to the IC, LIC and LC composition. The heavy chain homodimer serves as a scaffold for the probable homodimeric assembly of the respective non-catalytic subunits. The ICs and LICs bind directly to the HC dimer and the LCs assemble on the IC dimer. Interacts with DYNC1H1. Interacts with DYNLT1 and DYNLT3. Interacts with DCTN1. Interacts with DYNLL2. Interacts with MCRS1; the interaction is required for the proper distribution of centriolar satellites.

The protein resides in the cytoplasm. It is found in the chromosome. It localises to the centromere. The protein localises to the kinetochore. Its subcellular location is the cytoskeleton. The protein resides in the spindle pole. In terms of biological role, acts as one of several non-catalytic accessory components of the cytoplasmic dynein 1 complex that are thought to be involved in linking dynein to cargos and to adapter proteins that regulate dynein function. Cytoplasmic dynein 1 acts as a motor for the intracellular retrograde motility of vesicles and organelles along microtubules. The intermediate chains mediate the binding of dynein to dynactin via its 150 kDa component (p150-glued) DCTN1. May play a role in mediating the interaction of cytoplasmic dynein with membranous organelles and kinetochores. This Mus musculus (Mouse) protein is Cytoplasmic dynein 1 intermediate chain 1 (Dync1i1).